Here is a 388-residue protein sequence, read N- to C-terminus: Nocturnin (388 aa).

E152 serves as a coordination point for Mg(2+). Residues E152, K176–W178, N220, H243–A246, D281–N283, and H371 each bind substrate.

It belongs to the CCR4/nocturin family. It depends on Mg(2+) as a cofactor. In terms of tissue distribution, expressed only in the photoreceptors of the retina. Expression is controlled by the retinal circadian clock.

It localises to the cytoplasm. It is found in the nucleus. Its subcellular location is the perinuclear region. The protein resides in the mitochondrion. The enzyme catalyses NADP(+) + H2O = phosphate + NAD(+). It catalyses the reaction NADPH + H2O = phosphate + NADH. Its function is as follows. Phosphatase which catalyzes the conversion of NADP(+) to NAD(+) and of NADPH to NADH. Shows a small preference for NADPH over NADP(+). Component of the circadian clock or downstream effector of clock function. Exhibits a high amplitude circadian rhythm with maximal levels in early evening. In constant darkness or constant light, the amplitude of the rhythm decreases. This is Nocturnin from Xenopus laevis (African clawed frog).